A 249-amino-acid chain; its full sequence is Triosephosphate isomerase (249 aa).

Substrate-binding residues include N12 and K14. K14 bears the N6-acetyllysine mark. 3'-nitrotyrosine is present on Y68. At S80 the chain carries Phosphoserine. Residue H96 is the Electrophile of the active site. S106 is modified (phosphoserine). K142 participates in a covalent cross-link: Glycyl lysine isopeptide (Lys-Gly) (interchain with G-Cter in SUMO1). The residue at position 149 (K149) is an N6-succinyllysine. Residue K156 is modified to N6-acetyllysine; alternate. At K156 the chain carries N6-succinyllysine; alternate. Phosphoserine is present on S159. Residue E166 is the Proton acceptor of the active site. T173 is subject to Phosphothreonine. K194 is modified (N6-acetyllysine; alternate). K194 is modified (N6-succinyllysine; alternate). K194 bears the N6-methyllysine; alternate mark. Position 198 is a phosphoserine (S198). A 3'-nitrotyrosine modification is found at Y209. S212 is modified (phosphoserine). T214 carries the phosphothreonine modification. S223 carries the phosphoserine modification. Position 238 is an N6-acetyllysine (K238).

Belongs to the triosephosphate isomerase family. In terms of assembly, homodimer.

It localises to the cytoplasm. It catalyses the reaction dihydroxyacetone phosphate = methylglyoxal + phosphate. The catalysed reaction is D-glyceraldehyde 3-phosphate = dihydroxyacetone phosphate. It participates in carbohydrate degradation; glycolysis; D-glyceraldehyde 3-phosphate from glycerone phosphate: step 1/1. Its pathway is carbohydrate biosynthesis; gluconeogenesis. Its function is as follows. Triosephosphate isomerase is an extremely efficient metabolic enzyme that catalyzes the interconversion between dihydroxyacetone phosphate (DHAP) and D-glyceraldehyde-3-phosphate (G3P) in glycolysis and gluconeogenesis. In terms of biological role, it is also responsible for the non-negligible production of methylglyoxal a reactive cytotoxic side-product that modifies and can alter proteins, DNA and lipids. The sequence is that of Triosephosphate isomerase (TPI1) from Bos taurus (Bovine).